A 305-amino-acid polypeptide reads, in one-letter code: Methionyl-tRNA formyltransferase (305 aa).

110-113 (SLLP) contributes to the (6S)-5,6,7,8-tetrahydrofolate binding site.

Belongs to the Fmt family.

It catalyses the reaction L-methionyl-tRNA(fMet) + (6R)-10-formyltetrahydrofolate = N-formyl-L-methionyl-tRNA(fMet) + (6S)-5,6,7,8-tetrahydrofolate + H(+). In terms of biological role, attaches a formyl group to the free amino group of methionyl-tRNA(fMet). The formyl group appears to play a dual role in the initiator identity of N-formylmethionyl-tRNA by promoting its recognition by IF2 and preventing the misappropriation of this tRNA by the elongation apparatus. This chain is Methionyl-tRNA formyltransferase, found in Gluconacetobacter diazotrophicus (strain ATCC 49037 / DSM 5601 / CCUG 37298 / CIP 103539 / LMG 7603 / PAl5).